The chain runs to 634 residues: Glutamate--tRNA ligase (634 aa).

The short motif at 108 to 118 (PNPSGPLHIGH) is the 'HIGH' region element.

The protein belongs to the class-I aminoacyl-tRNA synthetase family. Glutamate--tRNA ligase type 2 subfamily.

The protein resides in the cytoplasm. The catalysed reaction is tRNA(Glu) + L-glutamate + ATP = L-glutamyl-tRNA(Glu) + AMP + diphosphate. Its function is as follows. Catalyzes the attachment of glutamate to tRNA(Glu) in a two-step reaction: glutamate is first activated by ATP to form Glu-AMP and then transferred to the acceptor end of tRNA(Glu). In Methanoregula boonei (strain DSM 21154 / JCM 14090 / 6A8), this protein is Glutamate--tRNA ligase.